Consider the following 385-residue polypeptide: cAMP-dependent protein kinase regulatory subunit (385 aa).

Over residues 1–22 (MSSTGFTSPFGNANPFGSSGRS) the composition is skewed to polar residues. Disordered regions lie at residues 1 to 51 (MSST…GVKN) and 77 to 111 (DFPA…PVHP). Positions 1-128 (MSSTGFTSPF…RLKKAISGNF (128 aa)) are dimerization and phosphorylation. Position 89 is a phosphoserine (serine 89). Residues 129–260 (LFNH…EEVP), glutamate 207, arginine 216, 261–378 (ILKT…EAEE), glutamate 328, and arginine 337 each bind 3',5'-cyclic AMP.

Belongs to the cAMP-dependent kinase regulatory chain family. Tetramer, composed of 2 regulatory (R) and 2 catalytic (C) subunits. In the presence of cAMP it dissociates into 2 active monomeric C subunits and an R dimer.

The protein is cAMP-dependent protein kinase regulatory subunit (mcb) of Neurospora crassa (strain ATCC 24698 / 74-OR23-1A / CBS 708.71 / DSM 1257 / FGSC 987).